The following is a 316-amino-acid chain: MKILLANPRGFCAGVDRAISIVERALELYQPPIYVRHEVVHNRFVVEGLKQRGAIFVEELHEVPDDNIVIFSAHGVSQAVRQEAKERALTVFDATCPLVTKVHMEVARASRKHMEVVLIGHAGHPEVEGTMGQYASLQGGMYLVEKPEDVLGLKAIVKDPSNLHYVSQTTLSVDETADVIDELRRVFPEIQGPRKDDICYATQNRQDAVRELAKDVDVVVVVGSKNSSNSTRLKELAEKLGTPAYLTDCPQDIEPQWFDGKVKVGVTAGASAPEELVNQILTRIKELGAQSVEEVLGREENMFFEVPKELQIKQID.

Cys-12 contributes to the [4Fe-4S] cluster binding site. Residues His-41 and His-74 each contribute to the (2E)-4-hydroxy-3-methylbut-2-enyl diphosphate site. Positions 41 and 74 each coordinate dimethylallyl diphosphate. Isopentenyl diphosphate contacts are provided by His-41 and His-74. Cys-96 is a binding site for [4Fe-4S] cluster. His-124 provides a ligand contact to (2E)-4-hydroxy-3-methylbut-2-enyl diphosphate. His-124 is a binding site for dimethylallyl diphosphate. His-124 contributes to the isopentenyl diphosphate binding site. Glu-126 acts as the Proton donor in catalysis. Thr-169 is a binding site for (2E)-4-hydroxy-3-methylbut-2-enyl diphosphate. Cys-199 is a [4Fe-4S] cluster binding site. The (2E)-4-hydroxy-3-methylbut-2-enyl diphosphate site is built by Ser-227, Ser-228, Asn-229, and Ser-271. Dimethylallyl diphosphate-binding residues include Ser-227, Ser-228, Asn-229, and Ser-271. Ser-227, Ser-228, Asn-229, and Ser-271 together coordinate isopentenyl diphosphate.

This sequence belongs to the IspH family. [4Fe-4S] cluster serves as cofactor.

The enzyme catalyses isopentenyl diphosphate + 2 oxidized [2Fe-2S]-[ferredoxin] + H2O = (2E)-4-hydroxy-3-methylbut-2-enyl diphosphate + 2 reduced [2Fe-2S]-[ferredoxin] + 2 H(+). It catalyses the reaction dimethylallyl diphosphate + 2 oxidized [2Fe-2S]-[ferredoxin] + H2O = (2E)-4-hydroxy-3-methylbut-2-enyl diphosphate + 2 reduced [2Fe-2S]-[ferredoxin] + 2 H(+). Its pathway is isoprenoid biosynthesis; dimethylallyl diphosphate biosynthesis; dimethylallyl diphosphate from (2E)-4-hydroxy-3-methylbutenyl diphosphate: step 1/1. The protein operates within isoprenoid biosynthesis; isopentenyl diphosphate biosynthesis via DXP pathway; isopentenyl diphosphate from 1-deoxy-D-xylulose 5-phosphate: step 6/6. In terms of biological role, catalyzes the conversion of 1-hydroxy-2-methyl-2-(E)-butenyl 4-diphosphate (HMBPP) into a mixture of isopentenyl diphosphate (IPP) and dimethylallyl diphosphate (DMAPP). Acts in the terminal step of the DOXP/MEP pathway for isoprenoid precursor biosynthesis. The protein is 4-hydroxy-3-methylbut-2-enyl diphosphate reductase of Vibrio vulnificus (strain CMCP6).